Reading from the N-terminus, the 133-residue chain is ATP synthase epsilon chain, chloroplastic (133 aa).

This sequence belongs to the ATPase epsilon chain family. F-type ATPases have 2 components, CF(1) - the catalytic core - and CF(0) - the membrane proton channel. CF(1) has five subunits: alpha(3), beta(3), gamma(1), delta(1), epsilon(1). CF(0) has three main subunits: a, b and c.

Its subcellular location is the plastid. The protein localises to the chloroplast thylakoid membrane. Its function is as follows. Produces ATP from ADP in the presence of a proton gradient across the membrane. In Thalassiosira pseudonana (Marine diatom), this protein is ATP synthase epsilon chain, chloroplastic.